Here is an 89-residue protein sequence, read N- to C-terminus: uncharacterized protein (89 aa).

Residues 67-86 (VYLSSMYICFILLAIWMTVW) traverse the membrane as a helical segment.

The protein resides in the membrane. This is an uncharacterized protein from Bacillus subtilis (strain 168).